Consider the following 212-residue polypeptide: Thymidylate kinase (212 aa).

10-17 (GIDGCGKT) serves as a coordination point for ATP.

It belongs to the thymidylate kinase family.

The enzyme catalyses dTMP + ATP = dTDP + ADP. Functionally, phosphorylation of dTMP to form dTDP in both de novo and salvage pathways of dTTP synthesis. This chain is Thymidylate kinase, found in Prochlorococcus marinus (strain AS9601).